A 363-amino-acid chain; its full sequence is NAD(P)H-quinone oxidoreductase subunit 1, chloroplastic (363 aa).

7 helical membrane-spanning segments follow: residues 26 to 46 (IIWI…GVLV), 98 to 118 (FSIG…VIPF), 127 to 147 (LTIG…GLLM), 246 to 266 (TEYS…NLLV), 268 to 288 (SLFV…YIFV), 300 to 320 (VFGP…FLFI), and 336 to 356 (LLNL…LLTT).

This sequence belongs to the complex I subunit 1 family. In terms of assembly, NDH is composed of at least 16 different subunits, 5 of which are encoded in the nucleus.

Its subcellular location is the plastid. It is found in the chloroplast thylakoid membrane. It catalyses the reaction a plastoquinone + NADH + (n+1) H(+)(in) = a plastoquinol + NAD(+) + n H(+)(out). The enzyme catalyses a plastoquinone + NADPH + (n+1) H(+)(in) = a plastoquinol + NADP(+) + n H(+)(out). Its function is as follows. NDH shuttles electrons from NAD(P)H:plastoquinone, via FMN and iron-sulfur (Fe-S) centers, to quinones in the photosynthetic chain and possibly in a chloroplast respiratory chain. The immediate electron acceptor for the enzyme in this species is believed to be plastoquinone. Couples the redox reaction to proton translocation, and thus conserves the redox energy in a proton gradient. The protein is NAD(P)H-quinone oxidoreductase subunit 1, chloroplastic of Coffea arabica (Arabian coffee).